Here is a 242-residue protein sequence, read N- to C-terminus: Guanylate kinase (242 aa).

A Guanylate kinase-like domain is found at 22-200 (GLLIVMTGAS…AVRELQAVQR (179 aa)). 29–36 (GASGVGKG) contributes to the ATP binding site.

This sequence belongs to the guanylate kinase family.

The protein localises to the cytoplasm. It catalyses the reaction GMP + ATP = GDP + ADP. Its function is as follows. Essential for recycling GMP and indirectly, cGMP. This chain is Guanylate kinase, found in Deinococcus geothermalis (strain DSM 11300 / CIP 105573 / AG-3a).